Consider the following 478-residue polypeptide: tRNA modification GTPase MnmE (478 aa).

Residues arginine 25, glutamate 82, and lysine 135 each contribute to the (6S)-5-formyl-5,6,7,8-tetrahydrofolate site. Residues glycine 231–glycine 400 enclose the TrmE-type G domain. Residue asparagine 241 coordinates K(+). GTP-binding positions include asparagine 241 to serine 246, threonine 260 to threonine 266, and aspartate 285 to glycine 288. Serine 245 contributes to the Mg(2+) binding site. Residues threonine 260, isoleucine 262, and threonine 265 each coordinate K(+). Threonine 266 is a Mg(2+) binding site. Residue lysine 478 participates in (6S)-5-formyl-5,6,7,8-tetrahydrofolate binding.

The protein belongs to the TRAFAC class TrmE-Era-EngA-EngB-Septin-like GTPase superfamily. TrmE GTPase family. In terms of assembly, homodimer. Heterotetramer of two MnmE and two MnmG subunits. K(+) is required as a cofactor.

The protein resides in the cytoplasm. Exhibits a very high intrinsic GTPase hydrolysis rate. Involved in the addition of a carboxymethylaminomethyl (cmnm) group at the wobble position (U34) of certain tRNAs, forming tRNA-cmnm(5)s(2)U34. This chain is tRNA modification GTPase MnmE, found in Polaromonas sp. (strain JS666 / ATCC BAA-500).